Here is a 598-residue protein sequence, read N- to C-terminus: MQAIKLVVVGDGAVGKSCLLIAYTTNAFPGEYVPTVFDNYSANVMIDGKPFNLGLWDTAGQEDYDRLRPLSYPQTDVFLICFSIVSRASFENIRAKWYPEILHHAPNIPIVLVGTKNDLRGHHDLKRPEVSAAEANNLVRELGFSGYVETSALLQTNLRELFSLAIRTATSPKSASAKKKGGFFSSSSSSSSSSSSKSSEKSVPIPPVMPPAGKAPWIDIITSSYDKEMRETLNSESFSDVKFTFFEERPVYAHRVILCSASEFFRRVFGYTLSSDQAEFKLDDLNEGKVKNIRSVTIKPNEKNDDGTKSSGEFVEISIDSSINRRVFNRFIEFLYTGVLNYLDKNDQLQETIALAESVGFKYLASACKNVLGGNEDLNPSIGTFLNDQLGETSKELFFTKKILSDIQFIVEGRSIFAHKALIFSRSNVVNALIGRNFIEREGKVEMSDDVTFDSFMAILEYLYTAHAPIEEGDSVGILVLGNRFDLRRLVSLCELYISKEIERATTIGIFRSELDIIGLLICAQRHNAPQLEKFCLHFISSNYQPMRRRKEFALLDDKTKKHIEDNQWPPIHYLRAVEDYEKEMEKLKSSSKGWFKK.

A GTP-binding site is contributed by 11–17 (DGAVGKS). The Effector region signature appears at 32-40 (YVPTVFDNY). Residues 57 to 61 (DTAGQ) and 115 to 118 (TKND) each bind GTP. Positions 175–210 (ASAKKKGGFFSSSSSSSSSSSSKSSEKSVPIPPVMP) are disordered. Over residues 182 to 197 (GFFSSSSSSSSSSSSK) the composition is skewed to low complexity. BTB domains follow at residues 239-344 (SDVK…NYLD) and 405-472 (SDIQ…PIEE).

This sequence in the N-terminal section; belongs to the small GTPase superfamily. Rho family. Interacts with pakB.

In Dictyostelium discoideum (Social amoeba), this protein is Rho-related protein racA (racA).